Reading from the N-terminus, the 73-residue chain is Guanine nucleotide-binding protein G(I)/G(S)/G(O) subunit gamma-11 (73 aa).

The segment at 51 to 73 is disordered; the sequence is DPLVKGIPEDKNPFKEKGSCVIS. Position 70 is a cysteine methyl ester (C70). A lipid anchor (S-farnesyl cysteine) is attached at C70. Positions 71–73 are cleaved as a propeptide — removed in mature form; sequence VIS.

Belongs to the G protein gamma family. In terms of assembly, g proteins are composed of 3 units, alpha, beta and gamma. Interacts with beta-1 and beta-3, but not with beta-2. Abundantly expressed in all tissues tested except for brain.

It localises to the cell membrane. Its function is as follows. Guanine nucleotide-binding proteins (G proteins) are involved as a modulator or transducer in various transmembrane signaling systems. The beta and gamma chains are required for the GTPase activity, for replacement of GDP by GTP, and for G protein-effector interaction. The polypeptide is Guanine nucleotide-binding protein G(I)/G(S)/G(O) subunit gamma-11 (GNG11) (Homo sapiens (Human)).